The chain runs to 274 residues: Large ribosomal subunit protein uL2 (274 aa).

2 disordered regions span residues 35-55 (FGKKSSGGRNNHGRITTRHRG) and 224-274 (AMNP…KLKG). Basic residues predominate over residues 45–55 (NHGRITTRHRG). Over residues 263-274 (KSSDKYIKKLKG) the composition is skewed to basic and acidic residues.

It belongs to the universal ribosomal protein uL2 family. As to quaternary structure, part of the 50S ribosomal subunit. Forms a bridge to the 30S subunit in the 70S ribosome.

One of the primary rRNA binding proteins. Required for association of the 30S and 50S subunits to form the 70S ribosome, for tRNA binding and peptide bond formation. It has been suggested to have peptidyltransferase activity; this is somewhat controversial. Makes several contacts with the 16S rRNA in the 70S ribosome. The chain is Large ribosomal subunit protein uL2 from Wolbachia pipientis subsp. Culex pipiens (strain wPip).